We begin with the raw amino-acid sequence, 70 residues long: Cold shock-like protein CspF (70 aa).

The region spanning 7–67 is the CSD domain; sequence GIVKTFDGKS…GLRGPSAANV (61 aa).

It localises to the cytoplasm. This chain is Cold shock-like protein CspF (cspF), found in Escherichia coli (strain K12).